Here is a 479-residue protein sequence, read N- to C-terminus: Glycogen synthase (479 aa).

Lys-15 is an ADP-alpha-D-glucose binding site.

It belongs to the glycosyltransferase 1 family. Bacterial/plant glycogen synthase subfamily.

It catalyses the reaction [(1-&gt;4)-alpha-D-glucosyl](n) + ADP-alpha-D-glucose = [(1-&gt;4)-alpha-D-glucosyl](n+1) + ADP + H(+). Its pathway is glycan biosynthesis; glycogen biosynthesis. Synthesizes alpha-1,4-glucan chains using ADP-glucose. In Roseobacter denitrificans (strain ATCC 33942 / OCh 114) (Erythrobacter sp. (strain OCh 114)), this protein is Glycogen synthase.